We begin with the raw amino-acid sequence, 313 residues long: Ribosomal RNA small subunit methyltransferase H (313 aa).

S-adenosyl-L-methionine-binding positions include 35–37 (GGH), Asp-55, Phe-79, Asp-100, and Gln-107.

This sequence belongs to the methyltransferase superfamily. RsmH family.

It is found in the cytoplasm. It catalyses the reaction cytidine(1402) in 16S rRNA + S-adenosyl-L-methionine = N(4)-methylcytidine(1402) in 16S rRNA + S-adenosyl-L-homocysteine + H(+). Specifically methylates the N4 position of cytidine in position 1402 (C1402) of 16S rRNA. The sequence is that of Ribosomal RNA small subunit methyltransferase H from Burkholderia pseudomallei (strain K96243).